The chain runs to 537 residues: Bifunctional purine biosynthesis protein PurH (537 aa).

The 151-residue stretch at 8 to 158 (IPAPDLVPVR…KNHAYVAVVT (151 aa)) folds into the MGS-like domain.

This sequence belongs to the PurH family.

It catalyses the reaction (6R)-10-formyltetrahydrofolate + 5-amino-1-(5-phospho-beta-D-ribosyl)imidazole-4-carboxamide = 5-formamido-1-(5-phospho-D-ribosyl)imidazole-4-carboxamide + (6S)-5,6,7,8-tetrahydrofolate. The catalysed reaction is IMP + H2O = 5-formamido-1-(5-phospho-D-ribosyl)imidazole-4-carboxamide. Its pathway is purine metabolism; IMP biosynthesis via de novo pathway; 5-formamido-1-(5-phospho-D-ribosyl)imidazole-4-carboxamide from 5-amino-1-(5-phospho-D-ribosyl)imidazole-4-carboxamide (10-formyl THF route): step 1/1. It participates in purine metabolism; IMP biosynthesis via de novo pathway; IMP from 5-formamido-1-(5-phospho-D-ribosyl)imidazole-4-carboxamide: step 1/1. The sequence is that of Bifunctional purine biosynthesis protein PurH from Chelativorans sp. (strain BNC1).